Here is a 728-residue protein sequence, read N- to C-terminus: FAS1 domain-containing protein fsc1 (728 aa).

An N-terminal signal peptide occupies residues M1–G21. Residues K22 to T670 lie on the Vacuolar side of the membrane. 2 FAS1 domains span residues S29–I151 and P154–I285. N-linked (GlcNAc...) asparagine glycosylation is present at N89. N404 and N501 each carry an N-linked (GlcNAc...) asparagine glycan. A helical membrane pass occupies residues F671–Y691. Over F692 to V728 the chain is Cytoplasmic.

The protein resides in the vacuole membrane. Required for the fusion of autophagosomes with the vacuole. The polypeptide is FAS1 domain-containing protein fsc1 (fsc1) (Schizosaccharomyces pombe (strain 972 / ATCC 24843) (Fission yeast)).